A 362-amino-acid polypeptide reads, in one-letter code: 3-dehydroquinate synthase (362 aa).

Residues 71–76 (DGEQYK), 105–109 (GVIGD), 129–130 (TT), Lys142, Lys151, and 169–172 (CLKT) each bind NAD(+). Zn(2+)-binding residues include Glu184, His247, and His264.

This sequence belongs to the sugar phosphate cyclases superfamily. Dehydroquinate synthase family. Requires Co(2+) as cofactor. The cofactor is Zn(2+). NAD(+) serves as cofactor.

Its subcellular location is the cytoplasm. It carries out the reaction 7-phospho-2-dehydro-3-deoxy-D-arabino-heptonate = 3-dehydroquinate + phosphate. The protein operates within metabolic intermediate biosynthesis; chorismate biosynthesis; chorismate from D-erythrose 4-phosphate and phosphoenolpyruvate: step 2/7. Its function is as follows. Catalyzes the conversion of 3-deoxy-D-arabino-heptulosonate 7-phosphate (DAHP) to dehydroquinate (DHQ). The chain is 3-dehydroquinate synthase from Salmonella schwarzengrund (strain CVM19633).